A 230-amino-acid polypeptide reads, in one-letter code: Large ribosomal subunit protein uL1 (230 aa).

It belongs to the universal ribosomal protein uL1 family. As to quaternary structure, part of the 50S ribosomal subunit.

Functionally, binds directly to 23S rRNA. The L1 stalk is quite mobile in the ribosome, and is involved in E site tRNA release. Its function is as follows. Protein L1 is also a translational repressor protein, it controls the translation of the L11 operon by binding to its mRNA. The polypeptide is Large ribosomal subunit protein uL1 (Acholeplasma laidlawii (strain PG-8A)).